The chain runs to 1416 residues: DNA-directed RNA polymerase subunit beta' (1416 aa).

Residues C71, C73, C86, and C89 each contribute to the Zn(2+) site. D461, D463, and D465 together coordinate Mg(2+). Positions 815, 892, 899, and 902 each coordinate Zn(2+).

This sequence belongs to the RNA polymerase beta' chain family. As to quaternary structure, the RNAP catalytic core consists of 2 alpha, 1 beta, 1 beta' and 1 omega subunit. When a sigma factor is associated with the core the holoenzyme is formed, which can initiate transcription. Requires Mg(2+) as cofactor. Zn(2+) serves as cofactor.

It carries out the reaction RNA(n) + a ribonucleoside 5'-triphosphate = RNA(n+1) + diphosphate. In terms of biological role, DNA-dependent RNA polymerase catalyzes the transcription of DNA into RNA using the four ribonucleoside triphosphates as substrates. In Blochmanniella pennsylvanica (strain BPEN), this protein is DNA-directed RNA polymerase subunit beta'.